We begin with the raw amino-acid sequence, 375 residues long: Queuine tRNA-ribosyltransferase (375 aa).

The Proton acceptor role is filled by Asp89. Substrate is bound by residues 89-93 (DSGGF), Asp143, Gln187, and Gly214. Residues 245-251 (GVGKPED) are RNA binding. Catalysis depends on Asp264, which acts as the Nucleophile. Residues 269–273 (TRNAR) are RNA binding; important for wobble base 34 recognition. The Zn(2+) site is built by Cys302, Cys304, Cys307, and His333.

The protein belongs to the queuine tRNA-ribosyltransferase family. Homodimer. Within each dimer, one monomer is responsible for RNA recognition and catalysis, while the other monomer binds to the replacement base PreQ1. The cofactor is Zn(2+).

It catalyses the reaction 7-aminomethyl-7-carbaguanine + guanosine(34) in tRNA = 7-aminomethyl-7-carbaguanosine(34) in tRNA + guanine. It participates in tRNA modification; tRNA-queuosine biosynthesis. Catalyzes the base-exchange of a guanine (G) residue with the queuine precursor 7-aminomethyl-7-deazaguanine (PreQ1) at position 34 (anticodon wobble position) in tRNAs with GU(N) anticodons (tRNA-Asp, -Asn, -His and -Tyr). Catalysis occurs through a double-displacement mechanism. The nucleophile active site attacks the C1' of nucleotide 34 to detach the guanine base from the RNA, forming a covalent enzyme-RNA intermediate. The proton acceptor active site deprotonates the incoming PreQ1, allowing a nucleophilic attack on the C1' of the ribose to form the product. After dissociation, two additional enzymatic reactions on the tRNA convert PreQ1 to queuine (Q), resulting in the hypermodified nucleoside queuosine (7-(((4,5-cis-dihydroxy-2-cyclopenten-1-yl)amino)methyl)-7-deazaguanosine). This is Queuine tRNA-ribosyltransferase from Escherichia coli O81 (strain ED1a).